A 230-amino-acid chain; its full sequence is Acyl-protein thioesterase 1 (230 aa).

Residues Ser119, Asp174, and His208 each act as charge relay system in the active site. N6-acetyllysine is present on Lys224.

This sequence belongs to the AB hydrolase superfamily. AB hydrolase 2 family. As to quaternary structure, homodimer.

It localises to the cytoplasm. The protein localises to the cell membrane. The protein resides in the nucleus membrane. Its subcellular location is the endoplasmic reticulum. It carries out the reaction S-hexadecanoyl-L-cysteinyl-[protein] + H2O = L-cysteinyl-[protein] + hexadecanoate + H(+). The enzyme catalyses 1-hexadecanoyl-sn-glycero-3-phosphocholine + H2O = sn-glycerol 3-phosphocholine + hexadecanoate + H(+). The catalysed reaction is a 1-(9Z-octadecenoyl)-2-acyl-sn-glycero-3-phosphocholine + H2O = a 2-acyl-sn-glycero-3-phosphocholine + (9Z)-octadecenoate + H(+). Functionally, acts as an acyl-protein thioesterase. Hydrolyzes fatty acids from S-acylated cysteine residues in proteins such as trimeric G alpha proteins or HRAS. Acts as a palmitoyl thioesterase that catalyzes depalmitoylation of proteins, such as ADRB2, KCNMA1 and SQSTM1. Acts as a negative regulator of autophagy by mediating palmitoylation of SQSTM1, decreasing affinity between SQSTM1 and ATG8 proteins and recruitment of ubiquitinated cargo proteins to autophagosomes. Acts as a lysophospholipase and hydrolyzes lysophosphatidylcholine (lyso-PC). Also hydrolyzes lysophosphatidylethanolamine (lyso-PE), lysophosphatidylinositol (lyso-PI) and lysophosphatidylserine (lyso-PS). Has much higher thioesterase activity than lysophospholipase activity. Contributes to the production of lysophosphatidic acid (LPA) during blood coagulation by recognizing and cleaving plasma phospholipids to generate lysophospholipids which in turn act as substrates for ENPP2 to produce LPA. In Pongo abelii (Sumatran orangutan), this protein is Acyl-protein thioesterase 1 (LYPLA1).